We begin with the raw amino-acid sequence, 689 residues long: DNA topoisomerase 1 (689 aa).

A Toprim domain is found at 3–113 (DNLVIVESPA…KENRVVFNEI (111 aa)). Residues E9 and D82 each coordinate Mg(2+). Residues 129-557 (EMNLVDAQQA…FFSSFKQDVE (429 aa)) enclose the Topo IA-type catalytic domain. Positions 163 to 168 (SAGRVQ) are interaction with DNA. The active-site O-(5'-phospho-DNA)-tyrosine intermediate is Y298. Residues 328–357 (SKRKASGKQGDQDAHEAIRPSSTMRTPDDM) are disordered. C4-type zinc fingers lie at residues 577-603 (CEVC…FPDC), 617-645 (CPKC…YPEC), and 658-681 (CPKC…CSNC).

The protein belongs to the type IA topoisomerase family. In terms of assembly, monomer. Mg(2+) is required as a cofactor.

It carries out the reaction ATP-independent breakage of single-stranded DNA, followed by passage and rejoining.. Functionally, releases the supercoiling and torsional tension of DNA, which is introduced during the DNA replication and transcription, by transiently cleaving and rejoining one strand of the DNA duplex. Introduces a single-strand break via transesterification at a target site in duplex DNA. The scissile phosphodiester is attacked by the catalytic tyrosine of the enzyme, resulting in the formation of a DNA-(5'-phosphotyrosyl)-enzyme intermediate and the expulsion of a 3'-OH DNA strand. The free DNA strand then undergoes passage around the unbroken strand, thus removing DNA supercoils. Finally, in the religation step, the DNA 3'-OH attacks the covalent intermediate to expel the active-site tyrosine and restore the DNA phosphodiester backbone. This chain is DNA topoisomerase 1, found in Staphylococcus aureus.